A 123-amino-acid polypeptide reads, in one-letter code: Small ribosomal subunit protein uS12 (123 aa).

D89 bears the 3-methylthioaspartic acid mark.

The protein belongs to the universal ribosomal protein uS12 family. In terms of assembly, part of the 30S ribosomal subunit. Contacts proteins S8 and S17. May interact with IF1 in the 30S initiation complex.

In terms of biological role, with S4 and S5 plays an important role in translational accuracy. Interacts with and stabilizes bases of the 16S rRNA that are involved in tRNA selection in the A site and with the mRNA backbone. Located at the interface of the 30S and 50S subunits, it traverses the body of the 30S subunit contacting proteins on the other side and probably holding the rRNA structure together. The combined cluster of proteins S8, S12 and S17 appears to hold together the shoulder and platform of the 30S subunit. In Acidiphilium cryptum (strain JF-5), this protein is Small ribosomal subunit protein uS12.